The chain runs to 247 residues: ATP synthase subunit a, chloroplastic (247 aa).

5 helical membrane passes run 38-58, 95-115, 134-154, 199-219, and 220-240; these read QVLI…AIAV, VPFI…GALL, INTT…AGLT, LVVV…VMFL, and GLFT…AYIG.

It belongs to the ATPase A chain family. F-type ATPases have 2 components, CF(1) - the catalytic core - and CF(0) - the membrane proton channel. CF(1) has five subunits: alpha(3), beta(3), gamma(1), delta(1), epsilon(1). CF(0) has four main subunits: a, b, b' and c.

Its subcellular location is the plastid. The protein resides in the chloroplast thylakoid membrane. Functionally, key component of the proton channel; it plays a direct role in the translocation of protons across the membrane. The sequence is that of ATP synthase subunit a, chloroplastic (atpI) from Spinacia oleracea (Spinach).